Reading from the N-terminus, the 243-residue chain is Adenylate kinase 4 (243 aa).

40–45 (GSGKGT) is a binding site for ATP. An NMP region spans residues 60-89 (ATGDMLRAAVAAKTPLGVKAKEAMDKGELV). Residues threonine 61, arginine 66, 87-89 (ELV), 115-118 (GFPR), and glutamine 122 contribute to the AMP site. The segment at 156–193 (GRWIHPSSGRSYHTKFAPPKVPGVDDVTGEPLIQRKDD) is LID. Arginine 157 lines the ATP pocket. 2 residues coordinate AMP: arginine 190 and arginine 201.

This sequence belongs to the adenylate kinase family.

The protein localises to the cytoplasm. The enzyme catalyses AMP + ATP = 2 ADP. In terms of biological role, catalyzes the reversible transfer of the terminal phosphate group between ATP and AMP. Plays an important role in cellular energy homeostasis and in adenine nucleotide metabolism. This Oryza sativa subsp. japonica (Rice) protein is Adenylate kinase 4 (ADK-B).